Consider the following 88-residue polypeptide: MASVVPLKEKKLLEVKLGELPSWILMRDFTPSGIAGAFQRGYYRYYNKYVNVKKGSIAGLSMVLAAYVFLNYCRSYKELKHERLRKYH.

Residue A2 is modified to N-acetylalanine. S3 carries the post-translational modification Phosphoserine. K16 bears the N6-acetyllysine mark. Residues 62–79 form a helical membrane-spanning segment; the sequence is MVLAAYVFLNYCRSYKEL.

As to quaternary structure, component of the ATP synthase complex composed at least of ATP5F1A/subunit alpha, ATP5F1B/subunit beta, ATP5MC1/subunit c (homooctomer), MT-ATP6/subunit a, MT-ATP8/subunit 8, ATP5ME/subunit e, ATP5MF/subunit f, ATP5MG/subunit g, ATP5MK/subunit k, ATP5MJ/subunit j, ATP5F1C/subunit gamma, ATP5F1D/subunit delta, ATP5F1E/subunit epsilon, ATP5PF/subunit F6, ATP5PB/subunit b, ATP5PD/subunit d, ATP5PO/subunit OSCP. ATP synthase complex consists of a soluble F(1) head domain (subunits alpha(3) and beta(3)) - the catalytic core - and a membrane F(0) domain - the membrane proton channel (subunits c, a, 8, e, f, g, k and j). These two domains are linked by a central stalk (subunits gamma, delta, and epsilon) rotating inside the F1 region and a stationary peripheral stalk (subunits F6, b, d, and OSCP).

It is found in the mitochondrion. The protein resides in the mitochondrion inner membrane. Functionally, subunit f, of the mitochondrial membrane ATP synthase complex (F(1)F(0) ATP synthase or Complex V) that produces ATP from ADP in the presence of a proton gradient across the membrane which is generated by electron transport complexes of the respiratory chain. ATP synthase complex consist of a soluble F(1) head domain - the catalytic core - and a membrane F(1) domain - the membrane proton channel. These two domains are linked by a central stalk rotating inside the F(1) region and a stationary peripheral stalk. During catalysis, ATP synthesis in the catalytic domain of F(1) is coupled via a rotary mechanism of the central stalk subunits to proton translocation. In vivo, can only synthesize ATP although its ATP hydrolase activity can be activated artificially in vitro. Part of the complex F(0) domain. The protein is ATP synthase F(0) complex subunit f, mitochondrial of Bos taurus (Bovine).